The sequence spans 129 residues: Large ribosomal subunit protein bL12 (129 aa).

Belongs to the bacterial ribosomal protein bL12 family. In terms of assembly, homodimer. Part of the ribosomal stalk of the 50S ribosomal subunit. Forms a multimeric L10(L12)X complex, where L10 forms an elongated spine to which 2 to 4 L12 dimers bind in a sequential fashion. Binds GTP-bound translation factors.

Its function is as follows. Forms part of the ribosomal stalk which helps the ribosome interact with GTP-bound translation factors. Is thus essential for accurate translation. The protein is Large ribosomal subunit protein bL12 of Solidesulfovibrio magneticus (strain ATCC 700980 / DSM 13731 / RS-1) (Desulfovibrio magneticus).